A 384-amino-acid chain; its full sequence is Chorismate synthase (384 aa).

NADP(+) contacts are provided by arginine 40 and arginine 46. Residues 128-130, glycine 292, 307-311, and arginine 333 each bind FMN; these read RAS and KPIPT.

The protein belongs to the chorismate synthase family. In terms of assembly, homotetramer. Requires FMNH2 as cofactor.

It catalyses the reaction 5-O-(1-carboxyvinyl)-3-phosphoshikimate = chorismate + phosphate. The protein operates within metabolic intermediate biosynthesis; chorismate biosynthesis; chorismate from D-erythrose 4-phosphate and phosphoenolpyruvate: step 7/7. Functionally, catalyzes the anti-1,4-elimination of the C-3 phosphate and the C-6 proR hydrogen from 5-enolpyruvylshikimate-3-phosphate (EPSP) to yield chorismate, which is the branch point compound that serves as the starting substrate for the three terminal pathways of aromatic amino acid biosynthesis. This reaction introduces a second double bond into the aromatic ring system. In Carboxydothermus hydrogenoformans (strain ATCC BAA-161 / DSM 6008 / Z-2901), this protein is Chorismate synthase.